Reading from the N-terminus, the 365-residue chain is MKRQLILEDGTVLIGTGFGGEIEKSGEVVFTTGMTGYQETLSDPSYCGQIVTFTYPLIGNYGINRDDFESIHPSVNGLIVNEICDHPSNFRNEISLNDYLKERKIPGLAGIDTRKLTRKIRQYGTLRGRLCNMDADVEYIVSQLKATVFTDHVKRVSTKDPYPSPGRGHRVVLVDFGMKHGILRELNKRDCDVIVVPYNTTAEEILRLSPDGIMLSNGPGDPKDVPEAIEMLKDIIGKVPLFGICLGHQLFALASGANTSKLKFGHRGLNHPVKNIATGKVAITSQNHGYAVEEESVENTELEITHVALNDGTVEGLRHKKFPAFTVQYHPEASAGPEDANDLFEDFLTMIENFKKEGEELCQNA.

CPSase regions lie at residues 1 to 166 (MKRQ…PSPG) and 1 to 169 (MKRQ…GRGH). L-glutamine-binding residues include S45, G218, and G220. Positions 170-357 (RVVLVDFGMK…LTMIENFKKE (188 aa)) constitute a Glutamine amidotransferase type-1 domain. C245 functions as the Nucleophile in the catalytic mechanism. Positions 246, 249, 287, 289, and 290 each coordinate L-glutamine. Residues H330 and E332 contribute to the active site.

It belongs to the CarA family. In terms of assembly, composed of two chains; the small (or glutamine) chain promotes the hydrolysis of glutamine to ammonia, which is used by the large (or ammonia) chain to synthesize carbamoyl phosphate. Tetramer of heterodimers (alpha,beta)4.

The enzyme catalyses hydrogencarbonate + L-glutamine + 2 ATP + H2O = carbamoyl phosphate + L-glutamate + 2 ADP + phosphate + 2 H(+). It catalyses the reaction L-glutamine + H2O = L-glutamate + NH4(+). It functions in the pathway amino-acid biosynthesis; L-arginine biosynthesis; carbamoyl phosphate from bicarbonate: step 1/1. The protein operates within pyrimidine metabolism; UMP biosynthesis via de novo pathway; (S)-dihydroorotate from bicarbonate: step 1/3. Its function is as follows. Small subunit of the glutamine-dependent carbamoyl phosphate synthetase (CPSase). CPSase catalyzes the formation of carbamoyl phosphate from the ammonia moiety of glutamine, carbonate, and phosphate donated by ATP, constituting the first step of 2 biosynthetic pathways, one leading to arginine and/or urea and the other to pyrimidine nucleotides. The small subunit (glutamine amidotransferase) binds and cleaves glutamine to supply the large subunit with the substrate ammonia. The protein is Carbamoyl phosphate synthase small chain of Bacillus cereus (strain ZK / E33L).